We begin with the raw amino-acid sequence, 3535 residues long: Lysosomal-trafficking regulator (3535 aa).

Residues 412-436 are disordered; sequence MESSASTAMPKQQQHPRHKRQRSSQ. One copy of the WD 1 repeat lies at 689 to 736; sequence TLSRRLIQLQLNSSDRASQLFQALLYKCSKHSRAKFWLDESSTPAKLE. Residues 1066–1096 show a composition bias toward polar residues; that stretch reads STHQEPTGVVNSPSGDSQQPRPRARSFNSGS. Disordered stretches follow at residues 1066–1132 and 1592–1613; these read STHQ…NAGV and GEGQ…TLDG. Residues 1596-1610 show a composition bias toward low complexity; that stretch reads PTGRSPGSSSSSRST. Positions 2686 to 2784 constitute a BEACH-type PH domain; sequence SLNSQILYNF…MREVFCDKIV (99 aa). A BEACH domain is found at 2784 to 3081; sequence VATPDQSKVI…QLFKSPHPAS (298 aa). The segment at 3254–3287 is disordered; the sequence is GIGGGGSERVDEAGNLHPTSSASSVNSSSISSGG. Low complexity predominate over residues 3273 to 3285; sequence SSASSVNSSSISS. 3 WD repeats span residues 3307 to 3346, 3442 to 3486, and 3489 to 3527; these read RHTD…YVRT, VHED…FVSE, and TGTS…GNAP.

As to quaternary structure, interacts with Rab5; the interaction is independent of GDP or GTP. Interacts with msps.

It is found in the vesicle. The protein resides in the cytoplasm. The protein localises to the cytoskeleton. It localises to the spindle. Its subcellular location is the spindle pole. Functionally, adapter protein that regulates intracellular membrane fusion reactions. Regulates the fusion of lysosome-related organelles. Promotes microtubules nucleation and centrosomal recruitment of microtubule nucleating proteins such as msps. In syncytial embryos, during the formation of yolk granules, suppresses vesicle fusion events with lipid droplets, possibly via interaction with Rab5. In the eye, regulates pigment granules size. In hemocytes, required for the late steps of bacteria phagocytosis. In fat body, required for autophagosome maturation. This chain is Lysosomal-trafficking regulator, found in Drosophila melanogaster (Fruit fly).